The primary structure comprises 167 residues: Inclusion membrane protein G (167 aa).

The next 2 membrane-spanning stretches (helical) occupy residues 33 to 57 (VVLA…AVLF) and 63 to 88 (VLPY…LRSL). Residues 94–167 (SCKKRSPEEI…DNSRSRSRSF (74 aa)) are sufficient for interaction with human 14-3-3 beta protein. Positions 97–167 (KRSPEEIEGA…DNSRSRSRSF (71 aa)) are disordered. A compositionally biased stretch (low complexity) spans 122 to 135 (ESASPQASPTSSTL). A Phosphorylation-dependent binding motif motif is present at residues 161 to 166 (RSRSRS). Ser166 carries the post-translational modification Phosphoserine.

As to quaternary structure, in infected HeLa cells colocalizes with host 14-3-3 protein (YWHAB); phosphorylation of Ser-166 is probably required. Interacts with Pkn1. In terms of processing, phosphorylated, possibly at more than one position, in infected HeLa cells. Phosphorylated by chlamydial kinase Pnk1.

The protein localises to the secreted. It localises to the host vacuole. The protein resides in the host pathogen-containing vacuole. Its subcellular location is the host pathogen-containing vacuole membrane. In terms of biological role, inclusion membrane protein probably involved in early modification events of the chlamydial inclusion. This is Inclusion membrane protein G from Chlamydia trachomatis serovar L2 (strain ATCC VR-902B / DSM 19102 / 434/Bu).